The primary structure comprises 161 residues: Cell division protein SepF (161 aa).

This sequence belongs to the SepF family. As to quaternary structure, homodimer. Interacts with FtsZ.

It localises to the cytoplasm. Functionally, cell division protein that is part of the divisome complex and is recruited early to the Z-ring. Probably stimulates Z-ring formation, perhaps through the cross-linking of FtsZ protofilaments. Its function overlaps with FtsA. This chain is Cell division protein SepF, found in Finegoldia magna (strain ATCC 29328 / DSM 20472 / WAL 2508) (Peptostreptococcus magnus).